A 197-amino-acid polypeptide reads, in one-letter code: Alkyl hydroperoxide reductase C (197 aa).

The region spanning 2–163 (VLVTQNAPNF…MIRMVDALDF (162 aa)) is the Thioredoxin domain. Cysteine 50 serves as the catalytic Cysteine sulfenic acid (-SOH) intermediate.

It belongs to the peroxiredoxin family. AhpC/Prx1 subfamily. In terms of assembly, homodimer; disulfide-linked, upon oxidation. 5 homodimers assemble to form a ring-like decamer.

The protein localises to the cytoplasm. It catalyses the reaction a hydroperoxide + NADH + H(+) = an alcohol + NAD(+) + H2O. Its function is as follows. Thiol-specific peroxidase that catalyzes the reduction of hydrogen peroxide and organic hydroperoxides to water and alcohols, respectively. Plays a role in cell protection against oxidative stress by detoxifying peroxides. This chain is Alkyl hydroperoxide reductase C, found in Buchnera aphidicola subsp. Acyrthosiphon pisum (strain APS) (Acyrthosiphon pisum symbiotic bacterium).